The following is a 505-amino-acid chain: Prenylcysteine oxidase 1 (505 aa).

Residues 1 to 27 form the signal peptide; the sequence is MGRVVAELVSSLLGLWLLLCSCGCPEG. 3 N-linked (GlcNAc...) asparagine glycosylation sites follow: N196, N323, and N353.

It belongs to the prenylcysteine oxidase family. It depends on FAD as a cofactor. As to expression, widely expressed.

The protein resides in the lysosome. It catalyses the reaction an S-polyprenyl-L-cysteine + O2 + H2O = a polyprenal + L-cysteine + H2O2. The enzyme catalyses S-(2E,6E)-farnesyl-L-cysteine + O2 + H2O = (2E,6E)-farnesal + L-cysteine + H2O2. The catalysed reaction is [(2E,6E,10E)-geranylgeranyl]-L-cysteine + O2 + H2O = (2E,6E,10E)-geranylgeranial + L-cysteine + H2O2. In terms of biological role, prenylcysteine oxidase that cleaves the thioether bond of prenyl-L-cysteines, such as farnesylcysteine and geranylgeranylcysteine. Only active against free prenylcysteines and not prenylcysteine residues within prenylated proteins or peptides. Involved in the final step in the degradation of prenylated proteins, by degrading prenylcysteines after the protein has been degraded. The sequence is that of Prenylcysteine oxidase 1 from Homo sapiens (Human).